Consider the following 408-residue polypeptide: Arylacetamide deacetylase-like 3 (408 aa).

The next 3 helical transmembrane spans lie at 2–22 (VVLA…GSLL), 46–66 (ILSC…KLGL), and 109–129 (SSIP…IGSL). The Involved in the stabilization of the negatively charged intermediate by the formation of the oxyanion hole signature appears at 120–122 (HGG). Residue Ser194 is part of the active site. Asn321 is a glycosylation site (N-linked (GlcNAc...) asparagine). Catalysis depends on residues Asp348 and His378.

The protein belongs to the 'GDXG' lipolytic enzyme family.

It localises to the membrane. This Mus musculus (Mouse) protein is Arylacetamide deacetylase-like 3 (Aadacl3).